A 161-amino-acid polypeptide reads, in one-letter code: Cyclic pyranopterin monophosphate synthase (161 aa).

Residues 75-77 (LCH) and 113-114 (ME) contribute to the substrate site. Residue Asp128 is part of the active site.

It belongs to the MoaC family. As to quaternary structure, homohexamer; trimer of dimers.

The enzyme catalyses (8S)-3',8-cyclo-7,8-dihydroguanosine 5'-triphosphate = cyclic pyranopterin phosphate + diphosphate. The protein operates within cofactor biosynthesis; molybdopterin biosynthesis. Its function is as follows. Catalyzes the conversion of (8S)-3',8-cyclo-7,8-dihydroguanosine 5'-triphosphate to cyclic pyranopterin monophosphate (cPMP). This Erwinia tasmaniensis (strain DSM 17950 / CFBP 7177 / CIP 109463 / NCPPB 4357 / Et1/99) protein is Cyclic pyranopterin monophosphate synthase.